Here is a 246-residue protein sequence, read N- to C-terminus: Small ribosomal subunit protein uS3 (246 aa).

One can recognise a KH type-2 domain in the interval 38–106 (IRQYLNARLA…DVQINIYEIR (69 aa)). The tract at residues 218-246 (VAKNQSRRPNAQGGNNRGGDRNRRRKGNR) is disordered.

It belongs to the universal ribosomal protein uS3 family. Part of the 30S ribosomal subunit. Forms a tight complex with proteins S10 and S14.

In terms of biological role, binds the lower part of the 30S subunit head. Binds mRNA in the 70S ribosome, positioning it for translation. The protein is Small ribosomal subunit protein uS3 of Porphyromonas gingivalis (strain ATCC 33277 / DSM 20709 / CIP 103683 / JCM 12257 / NCTC 11834 / 2561).